The following is a 125-amino-acid chain: Large ribosomal subunit protein bL12 (125 aa).

The protein belongs to the bacterial ribosomal protein bL12 family. As to quaternary structure, homodimer. Part of the ribosomal stalk of the 50S ribosomal subunit. Forms a multimeric L10(L12)X complex, where L10 forms an elongated spine to which 2 to 4 L12 dimers bind in a sequential fashion. Binds GTP-bound translation factors.

Forms part of the ribosomal stalk which helps the ribosome interact with GTP-bound translation factors. Is thus essential for accurate translation. The sequence is that of Large ribosomal subunit protein bL12 from Helicobacter pylori (strain P12).